Here is a 222-residue protein sequence, read N- to C-terminus: MEKLIIAVDGTSSSGKSVIFKKVARILNYQFVDTGLMYRAFTWYCLSKNIDINNQNQIIKLLDSFDYKISNDQVFVNNTNVTNKLTSSEILNAINKITIIPQIRNYMVKAQQQMVKNKGYILVGRDITSVVLPNADLKIYLDCDIEIRAKRRFEQNVENKILDKSFKQIYQDLIKRDQVDKTRKIGPLVLVSDAWYIDNSYLTIDQVVDIVVNKVHQLESQK.

10 to 18 (GTSSSGKSV) is an ATP binding site.

Belongs to the cytidylate kinase family. Type 1 subfamily.

It is found in the cytoplasm. The enzyme catalyses CMP + ATP = CDP + ADP. It catalyses the reaction dCMP + ATP = dCDP + ADP. The protein is Cytidylate kinase of Mycoplasma capricolum subsp. capricolum (strain California kid / ATCC 27343 / NCTC 10154).